We begin with the raw amino-acid sequence, 425 residues long: Synaptotagmin-4 (425 aa).

At 1–16 (MAPITTSRVEFDEIPT) the chain is on the vesicular side. Residues 17-37 (VVGIFSAFGLVFTVSLFAWIC) traverse the membrane as a helical segment. The Cytoplasmic portion of the chain corresponds to 38-425 (CQRRSAKSNK…IAKWHMLCDG (388 aa)). Disordered regions lie at residues 102 to 121 (NGNF…LENV) and 126 to 147 (FPET…SLTS). The segment covering 105–119 (FPKTNPKAGSSSDLE) has biased composition (polar residues). Residue Ser135 is modified to Phosphoserine; by MAPK8. Residues 137 to 146 (ESLKSSTSLT) are compositionally biased toward low complexity. 2 consecutive C2 domains span residues 153–274 (KLGT…MLMT) and 287–420 (GRGE…AKWH). Ca(2+)-binding residues include Asp246, Ser249, and Asp252.

The protein belongs to the synaptotagmin family. In terms of assembly, interacts with KIF1A; the interaction increases in presence of calcium and decreases when SYT4 is phosphorylated at Ser-135. The cofactor is Ca(2+). Post-translationally, phosphorylation at Ser-135 by MAPK8/JNK1 reduces interaction with KIF1A and neuronal dense core vesicles mobility. As to expression, widely expressed. Expressed in the brain. Expressed in pituitary gland, cerebellum, cortex, hypothalamus and hippocampus.

The protein localises to the cytoplasmic vesicle. Its subcellular location is the secretory vesicle. The protein resides in the neuronal dense core vesicle membrane. In terms of biological role, synaptotagmin family member which does not bind Ca(2+). Involved in neuronal dense core vesicles (DCVs) mobility through its interaction with KIF1A. Upon increased neuronal activity, phosphorylation by MAPK8/JNK1 destabilizes the interaction with KIF1A and captures DCVs to synapses. Plays a role in dendrite formation by melanocytes. This Rattus norvegicus (Rat) protein is Synaptotagmin-4 (Syt4).